Consider the following 639-residue polypeptide: DNA gyrase subunit B (639 aa).

A compositionally biased stretch (basic and acidic residues) spans Q392–A402. A disordered region spans residues Q392–S417. Residues S423–P537 enclose the Toprim domain. Residues E429, D502, and D504 each coordinate Mg(2+).

It belongs to the type II topoisomerase GyrB family. As to quaternary structure, heterotetramer, composed of two GyrA and two GyrB chains. In the heterotetramer, GyrA contains the active site tyrosine that forms a transient covalent intermediate with DNA, while GyrB binds cofactors and catalyzes ATP hydrolysis. It depends on Mg(2+) as a cofactor. Requires Mn(2+) as cofactor. Ca(2+) serves as cofactor.

Its subcellular location is the cytoplasm. It carries out the reaction ATP-dependent breakage, passage and rejoining of double-stranded DNA.. Its function is as follows. A type II topoisomerase that negatively supercoils closed circular double-stranded (ds) DNA in an ATP-dependent manner to modulate DNA topology and maintain chromosomes in an underwound state. Negative supercoiling favors strand separation, and DNA replication, transcription, recombination and repair, all of which involve strand separation. Also able to catalyze the interconversion of other topological isomers of dsDNA rings, including catenanes and knotted rings. Type II topoisomerases break and join 2 DNA strands simultaneously in an ATP-dependent manner. This is DNA gyrase subunit B from Haloferax lucentense (strain DSM 14919 / JCM 9276 / NCIMB 13854 / Aa 2.2) (Haloferax alicantei).